Here is a 289-residue protein sequence, read N- to C-terminus: tRNA pseudouridine synthase B (289 aa).

Aspartate 38 functions as the Nucleophile in the catalytic mechanism.

This sequence belongs to the pseudouridine synthase TruB family. Type 1 subfamily.

The catalysed reaction is uridine(55) in tRNA = pseudouridine(55) in tRNA. Its function is as follows. Responsible for synthesis of pseudouridine from uracil-55 in the psi GC loop of transfer RNAs. This Clostridium tetani (strain Massachusetts / E88) protein is tRNA pseudouridine synthase B.